The sequence spans 201 residues: Lipopolysaccharide core heptose(II)-phosphate phosphatase (201 aa).

The first 35 residues, 1–35, serve as a signal peptide directing secretion; it reads MLAFTLRFIKNKRYLATLAGALVIIAGLTSQHAWS.

Belongs to the phosphoglycerate mutase family. Ais subfamily.

Its subcellular location is the periplasm. Its pathway is bacterial outer membrane biogenesis; lipopolysaccharide metabolism. Functionally, catalyzes the dephosphorylation of heptose(II) of the outer membrane lipopolysaccharide core. The polypeptide is Lipopolysaccharide core heptose(II)-phosphate phosphatase (Salmonella paratyphi A (strain AKU_12601)).